A 311-amino-acid polypeptide reads, in one-letter code: Ribosomal protein L11 methyltransferase (311 aa).

The S-adenosyl-L-methionine site is built by T162, G183, D205, and N248.

It belongs to the methyltransferase superfamily. PrmA family.

It localises to the cytoplasm. It catalyses the reaction L-lysyl-[protein] + 3 S-adenosyl-L-methionine = N(6),N(6),N(6)-trimethyl-L-lysyl-[protein] + 3 S-adenosyl-L-homocysteine + 3 H(+). Its function is as follows. Methylates ribosomal protein L11. The sequence is that of Ribosomal protein L11 methyltransferase from Bacillus licheniformis (strain ATCC 14580 / DSM 13 / JCM 2505 / CCUG 7422 / NBRC 12200 / NCIMB 9375 / NCTC 10341 / NRRL NRS-1264 / Gibson 46).